The sequence spans 268 residues: Shikimate dehydrogenase (NADP(+)) (268 aa).

Residues 13 to 15 and Thr60 contribute to the shikimate site; that span reads SLS. Lys64 functions as the Proton acceptor in the catalytic mechanism. Residue Glu76 coordinates NADP(+). 2 residues coordinate shikimate: Asn85 and Asp100. NADP(+)-binding positions include 124 to 128, 148 to 153, and Ile209; these read GAGGA and NRTMAR. Tyr211 serves as a coordination point for shikimate. Gly232 provides a ligand contact to NADP(+).

It belongs to the shikimate dehydrogenase family. Homodimer.

The catalysed reaction is shikimate + NADP(+) = 3-dehydroshikimate + NADPH + H(+). It functions in the pathway metabolic intermediate biosynthesis; chorismate biosynthesis; chorismate from D-erythrose 4-phosphate and phosphoenolpyruvate: step 4/7. In terms of biological role, involved in the biosynthesis of the chorismate, which leads to the biosynthesis of aromatic amino acids. Catalyzes the reversible NADPH linked reduction of 3-dehydroshikimate (DHSA) to yield shikimate (SA). The chain is Shikimate dehydrogenase (NADP(+)) from Staphylococcus aureus (strain USA300).